Reading from the N-terminus, the 569-residue chain is CTP synthase (569 aa).

The Glutamine amidotransferase type-1 domain maps to 313-569 (RIAMVGKYTG…NASLERLKKM (257 aa)). The Nucleophile role is filled by Cys-410. Active-site residues include His-541 and Glu-543.

It belongs to the CTP synthase family.

It catalyses the reaction UTP + L-glutamine + ATP + H2O = CTP + L-glutamate + ADP + phosphate + 2 H(+). Its pathway is pyrimidine metabolism; CTP biosynthesis via de novo pathway; CTP from UDP: step 2/2. In terms of biological role, catalyzes the ATP-dependent amination of UTP to CTP with either L-glutamine or ammonia as the source of nitrogen. The polypeptide is CTP synthase (ctps) (Dictyostelium discoideum (Social amoeba)).